A 317-amino-acid chain; its full sequence is Ribosomal protein L11 methyltransferase (317 aa).

Residues threonine 158, glycine 179, aspartate 201, and asparagine 244 each contribute to the S-adenosyl-L-methionine site.

This sequence belongs to the methyltransferase superfamily. PrmA family.

It is found in the cytoplasm. The enzyme catalyses L-lysyl-[protein] + 3 S-adenosyl-L-methionine = N(6),N(6),N(6)-trimethyl-L-lysyl-[protein] + 3 S-adenosyl-L-homocysteine + 3 H(+). Methylates ribosomal protein L11. In Streptococcus pyogenes serotype M4 (strain MGAS10750), this protein is Ribosomal protein L11 methyltransferase.